Consider the following 36-residue polypeptide: Mu-agatoxin-Aa1a (36 aa).

4 disulfides stabilise this stretch: cysteine 2-cysteine 17, cysteine 9-cysteine 22, cysteine 16-cysteine 32, and cysteine 24-cysteine 30. Asparagine 36 is subject to Asparagine amide.

It belongs to the neurotoxin 07 (Beta/delta-agtx) family. 04 (aga-5) subfamily. As to expression, expressed by the venom gland.

It localises to the secreted. Insecticidal neurotoxin that induces an irreversible spastic paralysis when injected into insects. Modifies presynaptic voltage-gated sodium channels (Nav), causing them to open at the normal resting potential of the nerve. This leads to spontaneous release of neurotransmitter and repetitive action potentials in motor neurons. In Agelenopsis aperta (North American funnel-web spider), this protein is Mu-agatoxin-Aa1a.